Reading from the N-terminus, the 152-residue chain is MAKRVQVVLNEDVLSLGRDGDMVEVAPGYARNFLLPYGKAVPVTPAVMKQVEHRRAKEAERQAALKQEALAFRTALDTIGRFTVKKQTGDDDVLFGTVTNGDVAEVIEEATKKEVDRRDITVPDIHRTGNYKVSVKLHSEVTAEINLEVVSY.

The protein belongs to the bacterial ribosomal protein bL9 family.

Functionally, binds to the 23S rRNA. This chain is Large ribosomal subunit protein bL9, found in Synechococcus sp. (strain WH7803).